Consider the following 337-residue polypeptide: Homeobox protein knotted-1-like 4 (337 aa).

Disordered regions lie at residues 1–56 (MEQQ…SFHE) and 159–190 (FTLDDNGSEGGNSSEDEQEAGGGDMASAGLPE). Residues 27–38 (PTSTSTSPAVPS) show a composition bias toward low complexity. In terms of domain architecture, ELK spans 200 to 220 (ELKSHLLNKYSGYLSSLWREL). The homeobox; TALE-type DNA-binding region spans 221 to 284 (SKKKKKGKLP…NQRKRHWKPT (64 aa)).

It belongs to the TALE/KNOX homeobox family.

It is found in the nucleus. This is Homeobox protein knotted-1-like 4 (OSH10) from Oryza sativa subsp. japonica (Rice).